A 119-amino-acid polypeptide reads, in one-letter code: Immunoglobulin lambda variable 2-11 (119 aa).

A signal peptide spans 1–19 (MAWALLLLSLLTQGTGSWA). Q20 bears the Pyrrolidone carboxylic acid mark. The framework-1 stretch occupies residues 20 to 44 (QSALTQPRSVSGSPGQSVTISCTGT). Residues 20-119 (QSALTQPRSV…CSYAGSYTFH (100 aa)) form the Ig-like domain. A disulfide bridge links C41 with C109. The segment at 45 to 53 (SSDVGGYNY) is complementarity-determining-1. The tract at residues 54-70 (VSWYQQHPGKAPKLMIY) is framework-2. Residues 71 to 73 (DVS) form a complementarity-determining-2 region. Residues 74–109 (KRPSGVPDRFSGSKSGNTASLTISGLQAEDEADYYC) are framework-3. Positions 110 to 119 (CSYAGSYTFH) are complementarity-determining-3.

Immunoglobulins are composed of two identical heavy chains and two identical light chains; disulfide-linked.

The protein resides in the secreted. The protein localises to the cell membrane. V region of the variable domain of immunoglobulin light chains that participates in the antigen recognition. Immunoglobulins, also known as antibodies, are membrane-bound or secreted glycoproteins produced by B lymphocytes. In the recognition phase of humoral immunity, the membrane-bound immunoglobulins serve as receptors which, upon binding of a specific antigen, trigger the clonal expansion and differentiation of B lymphocytes into immunoglobulins-secreting plasma cells. Secreted immunoglobulins mediate the effector phase of humoral immunity, which results in the elimination of bound antigens. The antigen binding site is formed by the variable domain of one heavy chain, together with that of its associated light chain. Thus, each immunoglobulin has two antigen binding sites with remarkable affinity for a particular antigen. The variable domains are assembled by a process called V-(D)-J rearrangement and can then be subjected to somatic hypermutations which, after exposure to antigen and selection, allow affinity maturation for a particular antigen. In Homo sapiens (Human), this protein is Immunoglobulin lambda variable 2-11.